Consider the following 375-residue polypeptide: Probable serine/threonine-protein kinase PBL28 (375 aa).

Phosphothreonine is present on T65. The 281-residue stretch at 76–356 (FSDENLLGKG…MDCVKELQLI (281 aa)) folds into the Protein kinase domain. ATP contacts are provided by residues 82-90 (LGKGGFGRV) and K104. At Y152 the chain carries Phosphotyrosine. The active-site Proton acceptor is the D205. A Phosphothreonine modification is found at T245. At Y253 the chain carries Phosphotyrosine.

It belongs to the protein kinase superfamily. Ser/Thr protein kinase family.

Its subcellular location is the cell membrane. It carries out the reaction L-seryl-[protein] + ATP = O-phospho-L-seryl-[protein] + ADP + H(+). The enzyme catalyses L-threonyl-[protein] + ATP = O-phospho-L-threonyl-[protein] + ADP + H(+). Functionally, may be involved in plant defense signaling. This is Probable serine/threonine-protein kinase PBL28 from Arabidopsis thaliana (Mouse-ear cress).